We begin with the raw amino-acid sequence, 374 residues long: Probable dual-specificity RNA methyltransferase RlmN (374 aa).

A compositionally biased stretch (basic and acidic residues) spans 1 to 17 (MEKNEISEERRTQEKEK). Residues 1–22 (MEKNEISEERRTQEKEKQHGHR) are disordered. Residue Glu119 is the Proton acceptor of the active site. In terms of domain architecture, Radical SAM core spans 125-360 (SEERITACIS…VTVRKSQGAT (236 aa)). Residues Cys132 and Cys365 are joined by a disulfide bond. [4Fe-4S] cluster is bound by residues Cys139, Cys143, and Cys146. S-adenosyl-L-methionine contacts are provided by residues 190-191 (GE), Ser223, 246-248 (SLH), and Asn322. Cys365 (S-methylcysteine intermediate) is an active-site residue.

It belongs to the radical SAM superfamily. RlmN family. The cofactor is [4Fe-4S] cluster.

It localises to the cytoplasm. It carries out the reaction adenosine(2503) in 23S rRNA + 2 reduced [2Fe-2S]-[ferredoxin] + 2 S-adenosyl-L-methionine = 2-methyladenosine(2503) in 23S rRNA + 5'-deoxyadenosine + L-methionine + 2 oxidized [2Fe-2S]-[ferredoxin] + S-adenosyl-L-homocysteine. It catalyses the reaction adenosine(37) in tRNA + 2 reduced [2Fe-2S]-[ferredoxin] + 2 S-adenosyl-L-methionine = 2-methyladenosine(37) in tRNA + 5'-deoxyadenosine + L-methionine + 2 oxidized [2Fe-2S]-[ferredoxin] + S-adenosyl-L-homocysteine. In terms of biological role, specifically methylates position 2 of adenine 2503 in 23S rRNA and position 2 of adenine 37 in tRNAs. The protein is Probable dual-specificity RNA methyltransferase RlmN of Chlorobaculum tepidum (strain ATCC 49652 / DSM 12025 / NBRC 103806 / TLS) (Chlorobium tepidum).